The following is a 121-amino-acid chain: Protein p14.5 (121 aa).

Ala2 is subject to N-acetylalanine; by host. The segment at 84-121 (SLVPDEADNKPEDDEESGGAKPKKKKHLFPKLSSHKSK) is disordered. Basic residues predominate over residues 104-121 (KPKKKKHLFPKLSSHKSK).

This sequence belongs to the asfivirus structural protein p14.5 family. Interacts with the major capsid protein. Interacts with host IRF3; this interaction interferes with the recruitment of IRF3 to TBK1. Post-translationally, acetylated.

It is found in the virion. Structural protein required for transport of intracellular particles from the assembly sites to the plasma membrane. Binds to both ssDNA and dsDNA. Suppressed the activation of the cGAS/STING pathway by interfering with the recruitment of IRF3 to TBK1, which in turn suppresses IRF3 phosphorylation, decreasing interferon production. The protein is Protein p14.5 of African swine fever virus (isolate Pig/Kenya/KEN-50/1950) (ASFV).